The primary structure comprises 256 residues: 5-keto-4-deoxy-D-glucarate aldolase (256 aa).

His-50 functions as the Proton acceptor in the catalytic mechanism. Gln-151 is a substrate binding site. Glu-153 lines the Mg(2+) pocket. Positions 178 and 179 each coordinate substrate. Mg(2+) is bound at residue Asp-179.

It belongs to the HpcH/HpaI aldolase family. KDGluc aldolase subfamily. As to quaternary structure, homohexamer; trimer of dimers. It depends on Mg(2+) as a cofactor.

It carries out the reaction 5-dehydro-4-deoxy-D-glucarate = 2-hydroxy-3-oxopropanoate + pyruvate. It catalyses the reaction 2-dehydro-3-deoxy-D-glucarate = 2-hydroxy-3-oxopropanoate + pyruvate. Its pathway is carbohydrate acid metabolism; galactarate degradation; D-glycerate from galactarate: step 2/3. Its function is as follows. Catalyzes the reversible retro-aldol cleavage of both 5-keto-4-deoxy-D-glucarate and 2-keto-3-deoxy-D-glucarate to pyruvate and tartronic semialdehyde. The sequence is that of 5-keto-4-deoxy-D-glucarate aldolase from Escherichia coli O157:H7 (strain EC4115 / EHEC).